Reading from the N-terminus, the 120-residue chain is Succinate dehydrogenase membrane anchor subunit (120 aa).

Topologically, residues 1–17 (MTEKLLHFIRTKSGSMH) are mitochondrial matrix. A helical transmembrane segment spans residues 18–38 (WWLQRFLAILLAPIILYLLFD). Residues 39–63 (VAIYIGQQSDPTVMMFLNRIFNHNS) are Mitochondrial intermembrane-facing. The chain crosses the membrane as a helical span at residues 64-85 (IFIFITSVILIWHVRGGMEVII). H76 lines the heme pocket. The Mitochondrial matrix segment spans residues 86–95 (EDYVHGEKTR). An a ubiquinone-binding site is contributed by Y88. A helical transmembrane segment spans residues 96–120 (IVSIFLIRVIAIEIMEYLYKCSIIF).

In terms of assembly, part of an enzyme complex containing four subunits: a flavoprotein, an iron-sulfur protein, plus two membrane-anchoring proteins. The cofactor is heme.

It localises to the mitochondrion inner membrane. It participates in carbohydrate metabolism; tricarboxylic acid cycle. Its function is as follows. Membrane-anchoring subunit of succinate dehydrogenase (SDH). This chain is Succinate dehydrogenase membrane anchor subunit (SDH4), found in Reclinomonas americana.